A 408-amino-acid chain; its full sequence is uncharacterized protein (408 aa).

The disordered stretch occupies residues 49-77 (PRSSPEVQRKATAGENSEVGSPESSLSTS). Polar residues predominate over residues 62 to 77 (GENSEVGSPESSLSTS). In terms of domain architecture, F-box spans 124-170 (SFEFMQLPDTDICQIMSFLDAQSLLNLSQTCSHLRQLCLAHEDNAGK).

This is an uncharacterized protein from Caenorhabditis elegans.